The sequence spans 470 residues: 6-phosphofructo-2-kinase/fructose-2,6-bisphosphatase (470 aa).

The tract at residues 1–249 (MADRLRELTQ…VYYLMNIHVT (249 aa)) is 6-phosphofructo-2-kinase. The residue at position 31 (Ser-31) is a Phosphoserine; by PKA. 47 to 55 (GLPARGKTY) contacts ATP. Beta-D-fructose 6-phosphate contacts are provided by Arg-80 and Arg-104. Asp-130 is an active-site residue. Residues Thr-132 and Arg-138 each coordinate beta-D-fructose 6-phosphate. The active site involves Cys-160. 169–174 (NITQVK) is an ATP binding site. Beta-D-fructose 6-phosphate contacts are provided by Lys-174, Arg-195, and Tyr-199. Residues 250–470 (PRSIYLSRHG…EALDTVPEHF (221 aa)) are fructose-2,6-bisphosphatase. Beta-D-fructose 2,6-bisphosphate is bound at residue Arg-257. Catalysis depends on His-258, which acts as the Tele-phosphohistidine intermediate. Asn-264 and Gly-270 together coordinate beta-D-fructose 2,6-bisphosphate. Residue Glu-327 is the Proton donor/acceptor of the active site. Beta-D-fructose 2,6-bisphosphate-binding residues include Tyr-338, Arg-352, Lys-356, Tyr-367, Gln-393, and Arg-397. 349-352 (FALR) contributes to the ATP binding site. ATP-binding positions include 393–397 (QAVMR) and Tyr-429.

This sequence in the C-terminal section; belongs to the phosphoglycerate mutase family. As to quaternary structure, homodimer.

The catalysed reaction is beta-D-fructose 2,6-bisphosphate + H2O = beta-D-fructose 6-phosphate + phosphate. It catalyses the reaction beta-D-fructose 6-phosphate + ATP = beta-D-fructose 2,6-bisphosphate + ADP + H(+). Its activity is regulated as follows. Phosphorylation results in inhibition of the kinase activity. In terms of biological role, synthesis and degradation of fructose 2,6-bisphosphate. In Aquarana catesbeiana (American bullfrog), this protein is 6-phosphofructo-2-kinase/fructose-2,6-bisphosphatase.